The following is a 715-amino-acid chain: Fatty acid oxidation complex subunit alpha (715 aa).

The interval 1–190 (MDMTSAFTLN…RVGLVDEVVP (190 aa)) is enoyl-CoA hydratase. Residues 306 to 715 (GPLASVGVLG…WNSGETDLKE (410 aa)) form a 3-hydroxyacyl-CoA dehydrogenase region.

It in the N-terminal section; belongs to the enoyl-CoA hydratase/isomerase family. This sequence in the central section; belongs to the 3-hydroxyacyl-CoA dehydrogenase family. As to quaternary structure, heterotetramer of two alpha chains (FadJ) and two beta chains (FadI).

Its subcellular location is the cytoplasm. The catalysed reaction is a (3S)-3-hydroxyacyl-CoA = a (2E)-enoyl-CoA + H2O. It catalyses the reaction a 4-saturated-(3S)-3-hydroxyacyl-CoA = a (3E)-enoyl-CoA + H2O. It carries out the reaction a (3S)-3-hydroxyacyl-CoA + NAD(+) = a 3-oxoacyl-CoA + NADH + H(+). The enzyme catalyses (3S)-3-hydroxybutanoyl-CoA = (3R)-3-hydroxybutanoyl-CoA. It functions in the pathway lipid metabolism; fatty acid beta-oxidation. In terms of biological role, catalyzes the formation of a hydroxyacyl-CoA by addition of water on enoyl-CoA. Also exhibits 3-hydroxyacyl-CoA epimerase and 3-hydroxyacyl-CoA dehydrogenase activities. This chain is Fatty acid oxidation complex subunit alpha, found in Citrobacter koseri (strain ATCC BAA-895 / CDC 4225-83 / SGSC4696).